The chain runs to 123 residues: Large ribosomal subunit protein bL12 (123 aa).

The protein belongs to the bacterial ribosomal protein bL12 family. Homodimer. Part of the ribosomal stalk of the 50S ribosomal subunit. Forms a multimeric L10(L12)X complex, where L10 forms an elongated spine to which 2 to 4 L12 dimers bind in a sequential fashion. Binds GTP-bound translation factors.

Forms part of the ribosomal stalk which helps the ribosome interact with GTP-bound translation factors. Is thus essential for accurate translation. The chain is Large ribosomal subunit protein bL12 from Haemophilus influenzae (strain 86-028NP).